A 188-amino-acid polypeptide reads, in one-letter code: uncharacterized protein (188 aa).

Residues 1–23 (MVRPKLAFYILPLLLAFLGSALG) form the signal peptide. Asparagine 74 is a glycosylation site (N-linked (GlcNAc...) asparagine).

This is an uncharacterized protein from Mus musculus (Mouse).